We begin with the raw amino-acid sequence, 132 residues long: Small ribosomal subunit protein uS8 (132 aa).

This sequence belongs to the universal ribosomal protein uS8 family. In terms of assembly, part of the 30S ribosomal subunit. Contacts proteins S5 and S12.

In terms of biological role, one of the primary rRNA binding proteins, it binds directly to 16S rRNA central domain where it helps coordinate assembly of the platform of the 30S subunit. The sequence is that of Small ribosomal subunit protein uS8 from Geobacillus kaustophilus (strain HTA426).